The chain runs to 398 residues: Succinate--CoA ligase [ADP-forming] subunit beta (398 aa).

An ATP-grasp domain is found at 9–254 (KRLLHEYGAP…LSEEDPKEIE (246 aa)). ATP is bound by residues Lys46, 53-55 (GRG), Glu109, Ala112, and Glu117. Positions 209 and 223 each coordinate Mg(2+). Substrate-binding positions include Asn274 and 331–333 (GIM).

The protein belongs to the succinate/malate CoA ligase beta subunit family. As to quaternary structure, heterotetramer of two alpha and two beta subunits. It depends on Mg(2+) as a cofactor.

The catalysed reaction is succinate + ATP + CoA = succinyl-CoA + ADP + phosphate. The enzyme catalyses GTP + succinate + CoA = succinyl-CoA + GDP + phosphate. It functions in the pathway carbohydrate metabolism; tricarboxylic acid cycle; succinate from succinyl-CoA (ligase route): step 1/1. Succinyl-CoA synthetase functions in the citric acid cycle (TCA), coupling the hydrolysis of succinyl-CoA to the synthesis of either ATP or GTP and thus represents the only step of substrate-level phosphorylation in the TCA. The beta subunit provides nucleotide specificity of the enzyme and binds the substrate succinate, while the binding sites for coenzyme A and phosphate are found in the alpha subunit. The sequence is that of Succinate--CoA ligase [ADP-forming] subunit beta from Bartonella tribocorum (strain CIP 105476 / IBS 506).